The sequence spans 136 residues: Large ribosomal subunit protein uL16 (136 aa).

Belongs to the universal ribosomal protein uL16 family. In terms of assembly, part of the 50S ribosomal subunit.

Its function is as follows. Binds 23S rRNA and is also seen to make contacts with the A and possibly P site tRNAs. The protein is Large ribosomal subunit protein uL16 of Citrobacter koseri (strain ATCC BAA-895 / CDC 4225-83 / SGSC4696).